We begin with the raw amino-acid sequence, 245 residues long: 14-3-3 protein zeta (245 aa).

Belongs to the 14-3-3 family. Homodimer. Present in all adult tissues examined with the highest levels in the brain.

Its subcellular location is the cytoplasm. Its function is as follows. Adapter protein implicated in the regulation of a large spectrum of both general and specialized signaling pathways. Binds to a large number of partners, usually by recognition of a phosphoserine or phosphothreonine motif. Binding generally results in the modulation of the activity of the binding partner. The protein is 14-3-3 protein zeta (ywhaz) of Xenopus laevis (African clawed frog).